Here is a 426-residue protein sequence, read N- to C-terminus: Proline--tRNA ligase (426 aa).

Belongs to the class-II aminoacyl-tRNA synthetase family. ProS type 2 subfamily. As to quaternary structure, homodimer.

It localises to the cytoplasm. It carries out the reaction tRNA(Pro) + L-proline + ATP = L-prolyl-tRNA(Pro) + AMP + diphosphate. Catalyzes the attachment of proline to tRNA(Pro) in a two-step reaction: proline is first activated by ATP to form Pro-AMP and then transferred to the acceptor end of tRNA(Pro). This is Proline--tRNA ligase from Ehrlichia ruminantium (strain Gardel).